The following is a 147-amino-acid chain: Transcriptional regulator MraZ (147 aa).

SpoVT-AbrB domains follow at residues 5-50 and 79-122; these read AVAL…PLTA and AQEE…SDAG.

Belongs to the MraZ family. As to quaternary structure, forms oligomers.

Its subcellular location is the cytoplasm. The protein resides in the nucleoid. The chain is Transcriptional regulator MraZ from Azoarcus sp. (strain BH72).